Here is a 325-residue protein sequence, read N- to C-terminus: Gamma-hemolysin component B (325 aa).

The signal sequence occupies residues 1–26 (MKMNKLVKSSVATSMALLLLSGTANA).

It belongs to the aerolysin family. Toxicity requires sequential binding and synergistic association of a class S and a class F component which form heterooligomeric complexes. HlgB (class F) associates with either hlgA thus forming an AB toxin or with hlgC thus forming a CB toxin. Interacts with host AMFR.

The protein localises to the secreted. In terms of biological role, toxin that seems to act by forming pores in the membrane of the cell. Has a hemolytic and a leucotoxic activity. Promotes host AMFR-mediated inflammation by mediating 'Lys-27'-linked ubiquitination of TAB3, TAK1-TAB3 complex formation and phosphorylation of TAK1/MAP3K7. In turn, activates host NF-kappa-B signaling pathway. This chain is Gamma-hemolysin component B (hlgB), found in Staphylococcus aureus (strain NCTC 8325 / PS 47).